The chain runs to 253 residues: Imidazole glycerol phosphate synthase subunit HisF (253 aa).

Active-site residues include aspartate 11 and aspartate 130.

The protein belongs to the HisA/HisF family. Heterodimer of HisH and HisF.

The protein resides in the cytoplasm. It catalyses the reaction 5-[(5-phospho-1-deoxy-D-ribulos-1-ylimino)methylamino]-1-(5-phospho-beta-D-ribosyl)imidazole-4-carboxamide + L-glutamine = D-erythro-1-(imidazol-4-yl)glycerol 3-phosphate + 5-amino-1-(5-phospho-beta-D-ribosyl)imidazole-4-carboxamide + L-glutamate + H(+). The protein operates within amino-acid biosynthesis; L-histidine biosynthesis; L-histidine from 5-phospho-alpha-D-ribose 1-diphosphate: step 5/9. In terms of biological role, IGPS catalyzes the conversion of PRFAR and glutamine to IGP, AICAR and glutamate. The HisF subunit catalyzes the cyclization activity that produces IGP and AICAR from PRFAR using the ammonia provided by the HisH subunit. This chain is Imidazole glycerol phosphate synthase subunit HisF, found in Ruegeria sp. (strain TM1040) (Silicibacter sp.).